An 851-amino-acid chain; its full sequence is Putative cell signaling protein (851 aa).

3 stretches are compositionally biased toward basic and acidic residues: residues 165-176 (KLNEQDGKKSDN), 196-223 (DQAR…EETK), and 767-781 (SEER…LSHD). 2 disordered regions span residues 165-223 (KLNE…EETK) and 714-781 (DDSE…LSHD).

Palmitoylated.

The polypeptide is Putative cell signaling protein (Schizosaccharomyces pombe (strain 972 / ATCC 24843) (Fission yeast)).